Reading from the N-terminus, the 124-residue chain is Large ribosomal subunit protein eL31 (124 aa).

The protein belongs to the eukaryotic ribosomal protein eL31 family.

The sequence is that of Large ribosomal subunit protein eL31 (RpL31) from Aedes aegypti (Yellowfever mosquito).